Consider the following 211-residue polypeptide: UPF0329 protein ECU07_1880/ECU10_0020 (211 aa).

It belongs to the UPF0329 family.

This is UPF0329 protein ECU07_1880/ECU10_0020 from Encephalitozoon cuniculi (strain GB-M1) (Microsporidian parasite).